The sequence spans 263 residues: MPEGPEIRRAADNLEAAIKGKPLTDVWFAFAQLKPYESQLTGQIITRIETRGKALLTHFSNGLTLYSHNQLYGVWRVIDTGEIPQTTRILRVRLQTADKTILLYSASDIEMLTAEQLTTHPFLQRVGPDVLDARLTPEEVKARLLSPRFRNRQFSGLLLDQAFLAGLGNYLRVEILWQVGLTGQHKAKDLNEAQLNALSHALLDIPRLSYTTRGQADENKHHGALFRFKVFHRDGEACERCGGIIEKTTLSSRPFYWCPHCQK.

P2 serves as the catalytic Schiff-base intermediate with DNA. The Proton donor role is filled by E3. K53 serves as the catalytic Proton donor; for beta-elimination activity. DNA-binding residues include Q70, R125, and N169. The FPG-type zinc-finger motif lies at 229-263; the sequence is KVFHRDGEACERCGGIIEKTTLSSRPFYWCPHCQK. R253 functions as the Proton donor; for delta-elimination activity in the catalytic mechanism.

It belongs to the FPG family. The cofactor is Zn(2+).

It catalyses the reaction 2'-deoxyribonucleotide-(2'-deoxyribose 5'-phosphate)-2'-deoxyribonucleotide-DNA = a 3'-end 2'-deoxyribonucleotide-(2,3-dehydro-2,3-deoxyribose 5'-phosphate)-DNA + a 5'-end 5'-phospho-2'-deoxyribonucleoside-DNA + H(+). Involved in base excision repair of DNA damaged by oxidation or by mutagenic agents. Acts as a DNA glycosylase that recognizes and removes damaged bases. Has a preference for oxidized pyrimidines, such as thymine glycol, 5,6-dihydrouracil and 5,6-dihydrothymine. Has AP (apurinic/apyrimidinic) lyase activity and introduces nicks in the DNA strand. Cleaves the DNA backbone by beta-delta elimination to generate a single-strand break at the site of the removed base with both 3'- and 5'-phosphates. The sequence is that of Endonuclease 8 from Salmonella paratyphi A (strain AKU_12601).